A 379-amino-acid polypeptide reads, in one-letter code: Elongation factor Ts, mitochondrial (379 aa).

A mitochondrion-targeting transit peptide spans 1–45 (MALYRTARRPLQMMLFSRLGNPEQNYSSWARKDASQSAFGMFVRL).

It belongs to the EF-Ts family.

The protein localises to the mitochondrion. Associates with the EF-Tu.GDP complex and induces the exchange of GDP to GTP. It remains bound to the aminoacyl-tRNA.EF-Tu.GTP complex up to the GTP hydrolysis stage on the ribosome. The sequence is that of Elongation factor Ts, mitochondrial from Ricinus communis (Castor bean).